Reading from the N-terminus, the 558-residue chain is S-layer protein (558 aa).

The first 28 residues, 1–28 (MAMSLKKIGAIAVGGAMVATALASGVAA), serve as a signal peptide directing secretion. Residues Asn-112, Asn-138, Asn-158, Asn-197, Asn-226, Asn-291, and Asn-374 are each glycosylated (N-linked (GlcNAc...) asparagine).

This sequence belongs to the Mj S-layer protein family.

The protein localises to the secreted. It is found in the cell wall. Its subcellular location is the S-layer. Functionally, S-layer protein. The S-layer is a paracrystalline mono-layered assembly of proteins which coat the surface of the cell. The polypeptide is S-layer protein (sla) (Methanocaldococcus jannaschii (strain ATCC 43067 / DSM 2661 / JAL-1 / JCM 10045 / NBRC 100440) (Methanococcus jannaschii)).